Consider the following 202-residue polypeptide: Dephospho-CoA kinase (202 aa).

One can recognise a DPCK domain in the interval 6 to 202; the sequence is KVSITGDLSS…EYFYALKGAL (197 aa). 14–19 contacts ATP; the sequence is SSGKTE.

Belongs to the CoaE family.

The protein resides in the cytoplasm. The catalysed reaction is 3'-dephospho-CoA + ATP = ADP + CoA + H(+). It functions in the pathway cofactor biosynthesis; coenzyme A biosynthesis; CoA from (R)-pantothenate: step 5/5. Functionally, catalyzes the phosphorylation of the 3'-hydroxyl group of dephosphocoenzyme A to form coenzyme A. The chain is Dephospho-CoA kinase from Chlamydia abortus (strain DSM 27085 / S26/3) (Chlamydophila abortus).